A 286-amino-acid polypeptide reads, in one-letter code: Deleted in azoospermia-like-A (286 aa).

Residues 33 to 114 (NTVFVGGIDI…PAIRKICTYV (82 aa)) enclose the RRM domain. One can recognise a DAZ domain in the interval 155–180 (ACPYPSSPPMAIQQIPVGCQQPGYFQ).

It belongs to the RRM DAZ family. In terms of assembly, interacts with the C-terminus of pabp1 and with epabp. Prior to oocyte maturation, found in a complex with epabp and pum2 proteins and spdy1 mRNA; pum2 dissociates from the complex during maturation. In terms of tissue distribution, germ-line specific. Oocyte mRNA expression is first restricted to the granulo-fibrillar material (GFM) of the mitochondrial cloud and then to the oocyte germ plasm at the vegetal cortex. Remains an mRNA component of the germ plasm until the neurula stage. In 2-8 cell embryos, expressed in the germ plasm matrix between germinal granules and mitochondria. Expressed in primordial germ cells (PGCs) later in embryogenesis. In addition to the ovaries of adult females, expressed in the testis of adult and juvenile males in spermatogonia and spermatocytes. The protein is restricted to the embryonic germ plasm and primordial germ cells.

The protein resides in the cytoplasm. Its function is as follows. RNA-binding protein that is required for primordial germ cell (PGC) differentiation and indirectly necessary for the migration of PGCs through the endoderm. May promote meiotic cell division during spermatogenesis. Shows a preference for G- and U-rich RNAs and probably binds the 3'-UTR of target mRNAs. Stimulates the initiation of translation of mRNAs through the recruitment of poly(A)-binding proteins (PABPs). This is Deleted in azoospermia-like-A (dazl-a) from Xenopus laevis (African clawed frog).